The chain runs to 248 residues: Allergin-1 (248 aa).

A signal peptide spans 1–33 (MGDDDTPVCLSVASCKGVSCWLDKLLLWALTLS). At 34–150 (ITLRNTAVDC…DESCSSCLLS (117 aa)) the chain is on the extracellular side. One can recognise an Ig-like C2-type domain in the interval 54-137 (PNLNSSMSVV…SKYSQNFNFT (84 aa)). N-linked (GlcNAc...) asparagine glycosylation is present at asparagine 68. Cysteine 73 and cysteine 120 are disulfide-bonded. N-linked (GlcNAc...) asparagine glycosylation occurs at asparagine 135. Residues 151–171 (LLLPGVLLGLILPGLAFLIYL) form a helical membrane-spanning segment. Residues 172-248 (KYKKGCTGKT…DDYIYSELTY (77 aa)) lie on the Cytoplasmic side of the membrane. 2 short sequence motifs (ITIM motif) span residues 216-221 (IHYTTP) and 241-246 (YIYSEL). A phosphotyrosine mark is found at tyrosine 218 and tyrosine 243.

Monomer. Interacts (tyrosine-phosphorylated) with PTPN6, PTPN11 and INPP5D. In terms of processing, N-glycosylated. As to expression, mast cell-specific. Expressed in primary and transformed mast cells.

The protein resides in the cell membrane. Functionally, immunoglobulin-like receptor which plays an inhibitory role in degranulation of mast cells. Negatively regulates IgE-mediated mast cell activation and suppresses the type I immediate hypersensitivity reaction. The polypeptide is Allergin-1 (Milr1) (Rattus norvegicus (Rat)).